The primary structure comprises 193 residues: Putative protein-glutamate methylesterase/protein-glutamine glutaminase (193 aa).

The region spanning 1–179 (MNYEAIVIGV…DYVLSLEKIA (179 aa)) is the CheB-type methylesterase domain. Active-site residues include S11, H38, and D131.

The protein belongs to the CheB family.

Its subcellular location is the cytoplasm. It catalyses the reaction [protein]-L-glutamate 5-O-methyl ester + H2O = L-glutamyl-[protein] + methanol + H(+). It carries out the reaction L-glutaminyl-[protein] + H2O = L-glutamyl-[protein] + NH4(+). Functionally, may be involved in chemotaxis. The polypeptide is Putative protein-glutamate methylesterase/protein-glutamine glutaminase (cheB2) (Leptospira interrogans serogroup Icterohaemorrhagiae serovar copenhageni (strain Fiocruz L1-130)).